The following is a 311-amino-acid chain: Syntaxin-111 (311 aa).

The Cytoplasmic segment spans residues 1–284 (MNDLMTKSFM…AREHQRSSRK (284 aa)). Positions 213–275 (VHEIQDRHDA…QGGNKELRKA (63 aa)) constitute a t-SNARE coiled-coil homology domain. The chain crosses the membrane as a helical; Anchor for type IV membrane protein span at residues 285-305 (WLCIGIIILLLLVLLVIVPIA). Topologically, residues 306 to 311 (TSFKRS) are vesicular.

This sequence belongs to the syntaxin family. In terms of tissue distribution, expressed in roots and panicles.

It is found in the cell membrane. It localises to the cytoplasm. In terms of biological role, vesicle trafficking protein that functions in the secretory pathway. The chain is Syntaxin-111 from Oryza sativa subsp. japonica (Rice).